Consider the following 362-residue polypeptide: Chorismate synthase (362 aa).

NADP(+) is bound at residue R47. FMN-binding positions include 124–126, G286, 301–305, and R327; these read RSS and KPTAT.

This sequence belongs to the chorismate synthase family. Homotetramer. It depends on FMNH2 as a cofactor.

It carries out the reaction 5-O-(1-carboxyvinyl)-3-phosphoshikimate = chorismate + phosphate. It participates in metabolic intermediate biosynthesis; chorismate biosynthesis; chorismate from D-erythrose 4-phosphate and phosphoenolpyruvate: step 7/7. Functionally, catalyzes the anti-1,4-elimination of the C-3 phosphate and the C-6 proR hydrogen from 5-enolpyruvylshikimate-3-phosphate (EPSP) to yield chorismate, which is the branch point compound that serves as the starting substrate for the three terminal pathways of aromatic amino acid biosynthesis. This reaction introduces a second double bond into the aromatic ring system. The chain is Chorismate synthase from Nostoc punctiforme (strain ATCC 29133 / PCC 73102).